The primary structure comprises 197 residues: MSNKEQHIEKEEQLQEEKHEEQQKTEETEVEAVNGVDPLEEAILRVQELEAQLTEMVKKEQDFLLRSRAEMDNIRRRAEQDVEKAHKFGLEKFSKDILNTIDNLERALATPANLEDESIKSLFDGVELTLKELLATVSRFGVEAVGVVGETFNPEVHQAISMQPMEGFETNQITVVLQKGYLLNGRVIRPAMVMVAA.

Over residues 1 to 27 the composition is skewed to basic and acidic residues; the sequence is MSNKEQHIEKEEQLQEEKHEEQQKTEE. Residues 1-34 are disordered; the sequence is MSNKEQHIEKEEQLQEEKHEEQQKTEETEVEAVN.

It belongs to the GrpE family. In terms of assembly, homodimer.

The protein resides in the cytoplasm. Participates actively in the response to hyperosmotic and heat shock by preventing the aggregation of stress-denatured proteins, in association with DnaK and GrpE. It is the nucleotide exchange factor for DnaK and may function as a thermosensor. Unfolded proteins bind initially to DnaJ; upon interaction with the DnaJ-bound protein, DnaK hydrolyzes its bound ATP, resulting in the formation of a stable complex. GrpE releases ADP from DnaK; ATP binding to DnaK triggers the release of the substrate protein, thus completing the reaction cycle. Several rounds of ATP-dependent interactions between DnaJ, DnaK and GrpE are required for fully efficient folding. The protein is Protein GrpE of Pasteurella multocida (strain Pm70).